The chain runs to 346 residues: UDP-N-acetylenolpyruvoylglucosamine reductase (346 aa).

Residues 18–189 (LRAQARAFIA…VSVVFALKTH (172 aa)) enclose the FAD-binding PCMH-type domain. Residue R165 is part of the active site. The Proton donor role is filled by S240. E336 is a catalytic residue.

The protein belongs to the MurB family. FAD serves as cofactor.

The protein resides in the cytoplasm. It catalyses the reaction UDP-N-acetyl-alpha-D-muramate + NADP(+) = UDP-N-acetyl-3-O-(1-carboxyvinyl)-alpha-D-glucosamine + NADPH + H(+). Its pathway is cell wall biogenesis; peptidoglycan biosynthesis. Functionally, cell wall formation. The polypeptide is UDP-N-acetylenolpyruvoylglucosamine reductase (Neisseria meningitidis serogroup C (strain 053442)).